The primary structure comprises 259 residues: Tryptophan synthase alpha chain (259 aa).

Active-site proton acceptor residues include Glu-52 and Asp-63.

Belongs to the TrpA family. As to quaternary structure, tetramer of two alpha and two beta chains.

It catalyses the reaction (1S,2R)-1-C-(indol-3-yl)glycerol 3-phosphate + L-serine = D-glyceraldehyde 3-phosphate + L-tryptophan + H2O. Its pathway is amino-acid biosynthesis; L-tryptophan biosynthesis; L-tryptophan from chorismate: step 5/5. Its function is as follows. The alpha subunit is responsible for the aldol cleavage of indoleglycerol phosphate to indole and glyceraldehyde 3-phosphate. This chain is Tryptophan synthase alpha chain, found in Streptococcus gordonii (strain Challis / ATCC 35105 / BCRC 15272 / CH1 / DL1 / V288).